The following is a 767-amino-acid chain: Syn-copalyl diphosphate synthase, chloroplastic (767 aa).

A chloroplast-targeting transit peptide spans 1–47 (MPVFTASFQCVTLFGQPASAADAQPLLQGQRPFLHLHARRRRPCGPM). The segment at 45 to 74 (GPMLISKSPPYPASEETREWEADGQHEHTD) is disordered. A compositionally biased stretch (basic and acidic residues) spans 59–74 (EETREWEADGQHEHTD). Lys-233 is a binding site for substrate. Residues Asp-365 and Asp-367 each contribute to the Mg(2+) site. The short motif at 365 to 368 (DIDD) is the DXDD motif element. A substrate-binding site is contributed by Lys-453.

The protein belongs to the terpene synthase family. Mg(2+) serves as cofactor.

It localises to the plastid. Its subcellular location is the chloroplast. The enzyme catalyses (2E,6E,10E)-geranylgeranyl diphosphate = 9alpha-copalyl diphosphate. Functionally, catalyzes the conversion of geranylgeranyl diphosphate to the phytoalexin precursor syn-copalyl diphosphate. Required for the biosynthesis of momilactones that exude from roots and act as allelochemicals against lowland weeds in paddy soil. The chain is Syn-copalyl diphosphate synthase, chloroplastic from Oryza sativa subsp. japonica (Rice).